The primary structure comprises 928 residues: MYCBP-associated protein (928 aa).

2 disordered regions span residues 1-38 (MKKA…PVSN) and 164-183 (EEPK…APPL). Positions 164-177 (EEPKPKSPKEEKRP) are enriched in basic and acidic residues. Ser557 carries the phosphoserine modification. Phosphothreonine is present on Thr558. Ser564 carries the phosphoserine modification. The disordered stretch occupies residues 786–881 (IPDEGQKSPP…SSATSQEPID (96 aa)). The segment covering 806–865 (LGKEDRRGGAQEKKQLSARDKEEKKGSKTPSKEDRLNSKKQKAKDDKKVVKSTSRDRLLS) has biased composition (basic and acidic residues).

As to quaternary structure, interacts with MYCBP. Expressed in brain, retina, testis, heart and lung. Not detected in liver, kidney or intestine. In brain, highly abundant in CNS neurons of the hippocampus and cerebellum. Strongly expressed in cochlea and vestibular sensory epithelia. In both the organ of Corti and the vestibular organ, expression is restricted to hair cells.

Its subcellular location is the cytoplasm. The protein localises to the membrane. In terms of biological role, may play a role in spermatogenesis. May be involved in synaptic processes. The sequence is that of MYCBP-associated protein from Rattus norvegicus (Rat).